The sequence spans 473 residues: RUN domain-containing protein 3B (473 aa).

The interval 1–24 (MASRSLGGLSGIRGGGGGGGKKSL) is disordered. The span at 8-21 (GLSGIRGGGGGGGK) shows a compositional bias: gly residues. Arginine 13 bears the Omega-N-methylarginine mark. The 150-residue stretch at 57–206 (DDSSPEFNNF…IDFSFCLKGE (150 aa)) folds into the RUN domain. Phosphoserine is present on residues serine 232 and serine 233. Residues 317 to 342 (AHKLEKEQLEYIIVELQDQLTVLKNN) adopt a coiled-coil conformation. The segment covering 399-422 (SLSQTSLDPGQSQEGDGKQDTLNV) has biased composition (polar residues). Residues 399–428 (SLSQTSLDPGQSQEGDGKQDTLNVMSEGKE) are disordered.

Belongs to the RUNDC3 family. In terms of assembly, interacts with RAP2A. In terms of tissue distribution, isoform 2 is expressed at high levels in brain, thymus, ovary, testis, leukocyte, liver, small intestine and prostate. Isoform 1 is expressed in the brain, testis and adrenal gland. It is activated in tumorigenic breast cancer cell lines and in the primary tumor of breast cancer patients. Activation also correlates with metastatic lymph node invasion and can be detected in metastatic epithelial cells from the lymph nodes and in the bone marrow of patients.

The sequence is that of RUN domain-containing protein 3B (RUNDC3B) from Homo sapiens (Human).